The chain runs to 56 residues: Alpha-conotoxin Pn1.2 (56 aa).

A signal peptide spans 1-16 (MFTVFLLVVLATTVVS). Positions 17–39 (FTSDRASDGGNAAMSDLIALTIK) are excised as a propeptide. Cystine bridges form between Cys41–Cys47 and Cys42–Cys55. The ser-Xaa-Pro motif, crucial for potent interaction with nAChR stretch occupies residues 43–45 (SHP). A Cysteine amide modification is found at Cys55.

The protein belongs to the conotoxin A superfamily. Non-native isomers 'ribbon' (with disulfide connectivity C1-C4; C2-C3) and 'beads' (with disulfide connectivity C1-C2; C3-C4) also inhibit high voltage-activated (HVA) calcium channel currents in rat DRG neurons (20-30% inhibition at 1 uM toxin). In terms of tissue distribution, expressed by the venom duct.

It localises to the secreted. Its function is as follows. Alpha-conotoxins act on postsynaptic membranes, they bind to the nicotinic acetylcholine receptors (nAChR) and thus inhibit them. This toxin inhibits human alpha-7/CHRNA7 and alpha-9-alpha-10/CHRNA9/CHRNA10 AChR (complete inhibition at 3 uM of toxin). In addition, this toxin inhibits high voltage-activated (HVA) calcium channel currents in rat DRG neurons (22% inhibition at 1 uM toxin) probably by activating GABA(B) receptors (GABBR1 and/or GABBR2). The protein is Alpha-conotoxin Pn1.2 of Conus pennaceus (Feathered cone).